Reading from the N-terminus, the 339-residue chain is MVREEVAGSTQTLQWKCVESRVDSKRLYYGRFILSPLRKGQADTVGIALRRALLGEIEGTCITRAKFGSVPHEYSTIAGIEESVQEILLNLKEIVLRSNLYGVRDASICVKGPRYITAQDIILPPSVEIVDTAQPIANLTEPIDFCIDLQIKRDRGYQTELRKNYQDGSYPIDAVSMPVRNVNYSIFSCGNGNEKHEILFLEIWTNGSLTPKEALYEASRNLIDLFLPFLHAEEEGTSFEENKNRFTPPLFTFQKRLTNLKKNKKGIPLNCIFIDQLELTSRTYNCLKRANIHTLLDLLSKTEEDLLRIDSFRMEDRKHIWDTLEKHLPIDLLKNKLSF.

Residues 1 to 233 form an alpha N-terminal domain (alpha-NTD) region; it reads MVREEVAGST…DLFLPFLHAE (233 aa). Residues 266 to 339 are alpha C-terminal domain (alpha-CTD); sequence GIPLNCIFID…IDLLKNKLSF (74 aa).

The protein belongs to the RNA polymerase alpha chain family. In plastids the minimal PEP RNA polymerase catalytic core is composed of four subunits: alpha, beta, beta', and beta''. When a (nuclear-encoded) sigma factor is associated with the core the holoenzyme is formed, which can initiate transcription.

It localises to the plastid. It is found in the chloroplast. It catalyses the reaction RNA(n) + a ribonucleoside 5'-triphosphate = RNA(n+1) + diphosphate. In terms of biological role, DNA-dependent RNA polymerase catalyzes the transcription of DNA into RNA using the four ribonucleoside triphosphates as substrates. The polypeptide is DNA-directed RNA polymerase subunit alpha (Elymus canadensis (Canada wild rye)).